The sequence spans 584 residues: ATP synthase subunit alpha, mitochondrial (584 aa).

The N-terminal 24 residues, 1–24 (MRRFGSKFASGLASRCALACPLAS), are a transit peptide targeting the mitochondrion. ATP contacts are provided by residues 207–214 (DRQTGKTS) and Gln464.

This sequence belongs to the ATPase alpha/beta chains family. In terms of assembly, F-type ATPases have 2 components, F(1) - the catalytic core - and F(o) - the membrane proton channel. F(1) has five subunits: alpha(3), beta(3), gamma(1), delta(1), epsilon(1), plus the additional subunit P18 (Tb427.05.1710) that is not present in F(1)F(o) ATP synthase from metazoa. Subunit P18 (Tb927.5.1710) interacts with the alpha subunit with a 1:1 stoichiometry; the interaction is direct. Subunit gamma is part of the central stalk. F(o) has three main subunits: a, b and c. The trypanosomal ATPase complex contains additional subunits that are not present in the F(1)F(o) ATP synthase from metazoa.

Its subcellular location is the mitochondrion. The protein resides in the mitochondrion inner membrane. Its function is as follows. Mitochondrial membrane ATP synthase (F(1)F(o) ATP synthase) produces ATP from ADP in the presence of a proton gradient across the membrane which is generated by electron transport complexes of the respiratory chain. F-type ATPases consist of two structural domains, F(1) - containing the extramembraneous catalytic core, and F(o) - containing the membrane proton channel, linked together by a central stalk and a peripheral stalk. During catalysis, ATP synthesis in the catalytic domain of F(1) is coupled via a rotary mechanism of the central stalk subunits to proton translocation. Subunits alpha and beta form the catalytic core in F(1). Rotation of the central stalk against the surrounding alpha(3)beta(3) subunits leads to hydrolysis of ATP in three separate catalytic sites on the beta subunits. Subunit alpha does not bear the catalytic high-affinity ATP-binding sites. Contrary to the procyclic, insect form that requires F(1)F(o) ATP synthase for ATP synthesis, the bloodstream form relies on ATP hydrolysis by F(1)F(o) ATP synthase to maintain its mitochondrial membrane potential. The protein is ATP synthase subunit alpha, mitochondrial of Trypanosoma brucei brucei.